Consider the following 120-residue polypeptide: Large ribosomal subunit protein uL18 (120 aa).

This sequence belongs to the universal ribosomal protein uL18 family. Part of the 50S ribosomal subunit; part of the 5S rRNA/L5/L18/L25 subcomplex. Contacts the 5S and 23S rRNAs.

Its function is as follows. This is one of the proteins that bind and probably mediate the attachment of the 5S RNA into the large ribosomal subunit, where it forms part of the central protuberance. The sequence is that of Large ribosomal subunit protein uL18 from Afipia carboxidovorans (strain ATCC 49405 / DSM 1227 / KCTC 32145 / OM5) (Oligotropha carboxidovorans).